We begin with the raw amino-acid sequence, 150 residues long: Putative FAD-linked sulfhydryl oxidase 088R (150 aa).

The 105-residue stretch at 24 to 128 (GPFGPSGFGP…VTLQKAICIY (105 aa)) folds into the ERV/ALR sulfhydryl oxidase domain. Cysteines 74 and 77 form a disulfide.

The cofactor is FAD.

The catalysed reaction is 2 R'C(R)SH + O2 = R'C(R)S-S(R)CR' + H2O2. FAD-dependent sulfhydryl oxidase that catalyzes disulfide bond formation. The protein is Putative FAD-linked sulfhydryl oxidase 088R of Dryophytes versicolor (chameleon treefrog).